Consider the following 152-residue polypeptide: MKLILTADVDHLGSIGDTVEVKDGYGRNFLLPRGLAIVASRGAQKQADEIRRARETKSVRDLEHANEIKAAIEALGPIALPVKTSADSGKLFGSVTAADVVAAIKKAGGPNLDKRIVRLPKTHIKAVGTHFVSVHLHPEIDVEVSLDVVAQS.

Belongs to the bacterial ribosomal protein bL9 family.

Binds to the 23S rRNA. This chain is Large ribosomal subunit protein bL9, found in Mycobacterium bovis (strain ATCC BAA-935 / AF2122/97).